The following is a 254-amino-acid chain: HTH-type transcriptional regulator GolR (254 aa).

The 56-residue stretch at 3 to 58 (PFERQNKIIHLLDQNNKITVPELSRILDVSISTIRNDLSALEESGMIKKVHGGAVL) folds into the HTH deoR-type domain. The segment at residues 20 to 39 (ITVPELSRILDVSISTIRND) is a DNA-binding region (H-T-H motif).

Involved in the glycerol metabolism. Repressor of the gol operon for glycerol metabolism. This chain is HTH-type transcriptional regulator GolR, found in Listeria innocua serovar 6a (strain ATCC BAA-680 / CLIP 11262).